We begin with the raw amino-acid sequence, 505 residues long: ATP synthase subunit alpha (505 aa).

Residue 171-178 participates in ATP binding; that stretch reads GDRQTGKT.

The protein belongs to the ATPase alpha/beta chains family. F-type ATPases have 2 components, CF(1) - the catalytic core - and CF(0) - the membrane proton channel. CF(1) has five subunits: alpha(3), beta(3), gamma(1), delta(1), epsilon(1). CF(0) has three main subunits: a(1), b(2) and c(9-12). The alpha and beta chains form an alternating ring which encloses part of the gamma chain. CF(1) is attached to CF(0) by a central stalk formed by the gamma and epsilon chains, while a peripheral stalk is formed by the delta and b chains.

It is found in the cell inner membrane. The catalysed reaction is ATP + H2O + 4 H(+)(in) = ADP + phosphate + 5 H(+)(out). Functionally, produces ATP from ADP in the presence of a proton gradient across the membrane. The alpha chain is a regulatory subunit. The sequence is that of ATP synthase subunit alpha from Aliarcobacter butzleri (strain RM4018) (Arcobacter butzleri).